The chain runs to 757 residues: Serine/threonine-protein phosphatase 2A 56 kDa regulatory subunit delta isoform (757 aa).

Residues 1 to 11 are compositionally biased toward basic residues; the sequence is MMRGFKQRLIK. Disordered stretches follow at residues 1-172 and 188-250; these read MMRG…EDHA and ISNA…NPDT. Positions 12–21 are enriched in low complexity; it reads KTTGSSSSSS. Over residues 23–34 the composition is skewed to basic and acidic residues; that stretch reads KKKDKEKEKEKS. Composition is skewed to low complexity over residues 35–66, 86–119, and 128–147; these read STTS…GSKS, SSTS…STKK, and QSKQ…SSSS. Over residues 160–172 the composition is skewed to basic and acidic residues; it reads TKDDKSTSGEDHA. The segment covering 197–216 has biased composition (low complexity); that stretch reads SSDVENGNSNNNNMNINTSN. The span at 217 to 228 shows a compositional bias: polar residues; it reads TQDANHASSQSI. Residues threonine 242 and threonine 257 each carry the phosphothreonine modification. Residues 734–757 form a disordered region; that stretch reads SFNTASENNTLNEENENDCDSEIQ. Residues 746 to 757 are compositionally biased toward acidic residues; it reads EENENDCDSEIQ.

This sequence belongs to the phosphatase 2A regulatory subunit B family. PP2A consists of a common heterodimeric core enzyme, composed of a 36 kDa catalytic subunit (subunit C) and a 65 kDa constant regulatory subunit (PR65 or subunit A), that associates with a variety of regulatory subunits. Proteins that associate with the core dimer include three families of regulatory subunits B (the R2/B/PR55/B55, R3/B''/PR72/PR130/PR59 and R5/B'/B56 families), the 48 kDa variable regulatory subunit, viral proteins, and cell signaling molecules.

It localises to the cytoplasm. The protein localises to the nucleus. Functionally, the B regulatory subunit might modulate substrate selectivity and catalytic activity, and might also direct the localization of the catalytic enzyme to a particular subcellular compartment. Multicopy suppressor of ROX3 and HSP60. This is Serine/threonine-protein phosphatase 2A 56 kDa regulatory subunit delta isoform (RTS1) from Saccharomyces cerevisiae (strain ATCC 204508 / S288c) (Baker's yeast).